A 143-amino-acid chain; its full sequence is Large ribosomal subunit protein uL11 (143 aa).

It belongs to the universal ribosomal protein uL11 family. Part of the ribosomal stalk of the 50S ribosomal subunit. Interacts with L10 and the large rRNA to form the base of the stalk. L10 forms an elongated spine to which L12 dimers bind in a sequential fashion forming a multimeric L10(L12)X complex. In terms of processing, one or more lysine residues are methylated.

Functionally, forms part of the ribosomal stalk which helps the ribosome interact with GTP-bound translation factors. In Nitrosomonas europaea (strain ATCC 19718 / CIP 103999 / KCTC 2705 / NBRC 14298), this protein is Large ribosomal subunit protein uL11.